We begin with the raw amino-acid sequence, 374 residues long: Acid phosphatase-like protein XcAP-1 (374 aa).

The first 17 residues, Thr1–Ala17, serve as a signal peptide directing secretion. Residue Val25 participates in serotonin binding. Intrachain disulfides connect Cys144–Cys372, Cys165–Cys219, and Cys345–Cys349. Serotonin contacts are provided by Asp245, Asp249, Asn271, and Gln283.

Belongs to the histidine acid phosphatase family.

It is found in the secreted. Probably modulates blood feeding of fleas on vertebrate species by binding and sequestering different mediators involved in the host response. Binds biogenic amines: serotonin, adrenaline and noradrenaline. Binds leukotriene C4. Does not bind histamine, leukotriene B4, leukotriene D4, leukotriene E4, ADP, and stable analogs of thromboxane A2: U-46619 and cTXA2. The polypeptide is Acid phosphatase-like protein XcAP-1 (Xenopsylla cheopis (Oriental rat flea)).